We begin with the raw amino-acid sequence, 368 residues long: Alanine racemase (368 aa).

K40 acts as the Proton acceptor; specific for D-alanine in catalysis. K40 bears the N6-(pyridoxal phosphate)lysine mark. A substrate-binding site is contributed by R136. Catalysis depends on Y263, which acts as the Proton acceptor; specific for L-alanine. M310 provides a ligand contact to substrate.

This sequence belongs to the alanine racemase family. Requires pyridoxal 5'-phosphate as cofactor.

The catalysed reaction is L-alanine = D-alanine. Its pathway is amino-acid biosynthesis; D-alanine biosynthesis; D-alanine from L-alanine: step 1/1. In terms of biological role, catalyzes the interconversion of L-alanine and D-alanine. May also act on other amino acids. The protein is Alanine racemase (alr) of Streptococcus gordonii (strain Challis / ATCC 35105 / BCRC 15272 / CH1 / DL1 / V288).